A 177-amino-acid polypeptide reads, in one-letter code: uncharacterized protein (177 aa).

To Synechocystis PCC 6803 slr1290 and sll0925.

This is an uncharacterized protein from Synechocystis sp. (strain ATCC 27184 / PCC 6803 / Kazusa).